Consider the following 661-residue polypeptide: Bifunctional polymyxin resistance protein ArnA (661 aa).

A formyltransferase ArnAFT region spans residues Met1–Ile304. The Proton donor; for formyltransferase activity role is filled by His104. Residues Arg114 and Val136–Asp140 contribute to the (6R)-10-formyltetrahydrofolate site. The segment at Arg314–Pro661 is dehydrogenase ArnADH. Residues Asp347 and Asp368 to Ile369 contribute to the NAD(+) site. Residues Ala393, Tyr398, and Thr432–Ser433 each bind UDP-alpha-D-glucuronate. Glu434 (proton acceptor; for decarboxylase activity) is an active-site residue. UDP-alpha-D-glucuronate is bound by residues Arg460, Asn492, Lys526–Arg535, and Tyr613. Catalysis depends on Arg619, which acts as the Proton donor; for decarboxylase activity.

It in the N-terminal section; belongs to the Fmt family. UDP-L-Ara4N formyltransferase subfamily. This sequence in the C-terminal section; belongs to the NAD(P)-dependent epimerase/dehydratase family. UDP-glucuronic acid decarboxylase subfamily. As to quaternary structure, homohexamer, formed by a dimer of trimers.

It carries out the reaction UDP-alpha-D-glucuronate + NAD(+) = UDP-beta-L-threo-pentopyranos-4-ulose + CO2 + NADH. The enzyme catalyses UDP-4-amino-4-deoxy-beta-L-arabinose + (6R)-10-formyltetrahydrofolate = UDP-4-deoxy-4-formamido-beta-L-arabinose + (6S)-5,6,7,8-tetrahydrofolate + H(+). It participates in nucleotide-sugar biosynthesis; UDP-4-deoxy-4-formamido-beta-L-arabinose biosynthesis; UDP-4-deoxy-4-formamido-beta-L-arabinose from UDP-alpha-D-glucuronate: step 1/3. It functions in the pathway nucleotide-sugar biosynthesis; UDP-4-deoxy-4-formamido-beta-L-arabinose biosynthesis; UDP-4-deoxy-4-formamido-beta-L-arabinose from UDP-alpha-D-glucuronate: step 3/3. Its pathway is bacterial outer membrane biogenesis; lipopolysaccharide biosynthesis. In terms of biological role, bifunctional enzyme that catalyzes the oxidative decarboxylation of UDP-glucuronic acid (UDP-GlcUA) to UDP-4-keto-arabinose (UDP-Ara4O) and the addition of a formyl group to UDP-4-amino-4-deoxy-L-arabinose (UDP-L-Ara4N) to form UDP-L-4-formamido-arabinose (UDP-L-Ara4FN). The modified arabinose is attached to lipid A and is required for resistance to polymyxin and cationic antimicrobial peptides. This is Bifunctional polymyxin resistance protein ArnA from Klebsiella pneumoniae subsp. pneumoniae (strain ATCC 700721 / MGH 78578).